The sequence spans 116 residues: Large ribosomal subunit protein bL17 (116 aa).

This sequence belongs to the bacterial ribosomal protein bL17 family. Part of the 50S ribosomal subunit. Contacts protein L32.

The protein is Large ribosomal subunit protein bL17 of Helicobacter pylori (strain J99 / ATCC 700824) (Campylobacter pylori J99).